Here is a 198-residue protein sequence, read N- to C-terminus: Peroxynitrite isomerase (198 aa).

The short motif at 20–26 (GVWEGTG) is the GXWXGXG element. Position 189 (His-189) interacts with heme b.

The protein belongs to the nitrobindin family. As to quaternary structure, homodimer. It depends on heme b as a cofactor.

It catalyses the reaction peroxynitrite = nitrate. It functions in the pathway nitrogen metabolism. Heme-binding protein able to scavenge peroxynitrite and to protect free L-tyrosine against peroxynitrite-mediated nitration, by acting as a peroxynitrite isomerase that converts peroxynitrite to nitrate. Therefore, this protein likely plays a role in peroxynitrite sensing and in the detoxification of reactive nitrogen and oxygen species (RNS and ROS, respectively). Is able to bind nitric oxide (NO) in vitro, but may act as a sensor of peroxynitrite levels in vivo. The polypeptide is Peroxynitrite isomerase (Leifsonia xyli subsp. xyli (strain CTCB07)).